The chain runs to 305 residues: Ornithine carbamoyltransferase (305 aa).

Residues serine 50 to threonine 53, glutamine 77, arginine 101, and histidine 128 to glutamine 131 each bind carbamoyl phosphate. L-ornithine-binding positions include asparagine 159, aspartate 222, and serine 226–methionine 227. Carbamoyl phosphate is bound by residues cysteine 262–leucine 263 and arginine 290.

It belongs to the aspartate/ornithine carbamoyltransferase superfamily. OTCase family.

The protein localises to the cytoplasm. The enzyme catalyses carbamoyl phosphate + L-ornithine = L-citrulline + phosphate + H(+). It participates in amino-acid biosynthesis; L-arginine biosynthesis; L-arginine from L-ornithine and carbamoyl phosphate: step 1/3. Functionally, reversibly catalyzes the transfer of the carbamoyl group from carbamoyl phosphate (CP) to the N(epsilon) atom of ornithine (ORN) to produce L-citrulline. In Synechococcus elongatus (strain ATCC 33912 / PCC 7942 / FACHB-805) (Anacystis nidulans R2), this protein is Ornithine carbamoyltransferase.